Reading from the N-terminus, the 400-residue chain is Carnosine N-methyltransferase (400 aa).

The disordered stretch occupies residues 1–49; it reads MQRRRRAPPASQPAQDSGHSEEVEVQFSAGRLGSAAPAGPPVRGTAEDE. S-adenosyl-L-methionine contacts are provided by Gln155, Arg158, Gly199, Glu220, Asp286, Phe287, and Cys303. Residue Asp307 participates in carnosine binding. Tyr315 lines the S-adenosyl-L-methionine pocket. The carnosine site is built by His338 and Tyr389.

The protein belongs to the carnosine N-methyltransferase family. As to quaternary structure, homodimer. Each monomer accommodates one molecule of carnosine in its active pocket, precisely anchoring the histidine imidazole ring such that only N1 is exposed and deprotonated for methylation. Expressed at higher level in skeletal muscle compared to other tissues.

Its subcellular location is the cytoplasm. The protein localises to the cytosol. The protein resides in the nucleus. The catalysed reaction is carnosine + S-adenosyl-L-methionine = anserine + S-adenosyl-L-homocysteine + H(+). Functionally, N-methyltransferase that catalyzes the formation of anserine (beta-alanyl-N(Pi)-methyl-L-histidine) from carnosine. Anserine, a methylated derivative of carnosine (beta-alanyl-L-histidine), is an abundant constituent of vertebrate skeletal muscles. Also methylates other L-histidine-containing di- and tripeptides such as Gly-Gly-His, Gly-His and homocarnosine (GABA-His). In Rattus norvegicus (Rat), this protein is Carnosine N-methyltransferase.